The sequence spans 308 residues: Glutaminase 1 (308 aa).

Substrate contacts are provided by S64, N116, E161, N168, Y192, Y244, and V262.

The protein belongs to the glutaminase family. As to quaternary structure, homotetramer.

The enzyme catalyses L-glutamine + H2O = L-glutamate + NH4(+). This chain is Glutaminase 1, found in Halalkalibacterium halodurans (strain ATCC BAA-125 / DSM 18197 / FERM 7344 / JCM 9153 / C-125) (Bacillus halodurans).